Consider the following 476-residue polypeptide: H2.0-like homeobox protein (476 aa).

Disordered regions lie at residues 120-169, 328-401, and 413-476; these read QHLP…PSSK, WRHS…HQTT, and TASS…LAGL. Composition is skewed to low complexity over residues 123-134 and 158-168; these read PQQSPTQQQQPQ and HHSGSAPAPSS. The homeobox DNA-binding region spans 273–332; it reads RSWSRAVFSNLQRKGLEKRFEIQKYVTKPDRKQLAAMLGLTDAQVKVWFQNRRMKWRHSK. Composition is skewed to basic and acidic residues over residues 331 to 346 and 355 to 368; these read SKEAQAQKDKDKEAGE and EGEREERSPSRSEG. Acidic residues predominate over residues 369–379; it reads EAESESSDSES. Over residues 386–397 the composition is skewed to basic and acidic residues; that stretch reads DTERTEGTERSL. The segment covering 413–434 has biased composition (low complexity); the sequence is TASSSTSGSSFSFSSTSSLGSG. 2 stretches are compositionally biased toward polar residues: residues 435-446 and 455-467; these read NTHVGSASSLGG and HQPSVTSSPQSPE.

This sequence belongs to the H2.0 homeobox family. Expressed in Th1 cells, CD8-positive T-cells, B-cells and NK cells.

The protein localises to the nucleus. In terms of biological role, transcription factor required for TBX21/T-bet-dependent maturation of Th1 cells as well as maintenance of Th1-specific gene expression. Involved in embryogenesis and hematopoiesis. The chain is H2.0-like homeobox protein (Hlx) from Mus musculus (Mouse).